The chain runs to 411 residues: Glutamate dehydrogenase 3, mitochondrial (411 aa).

The N-terminal 18 residues, 1 to 18, are a transit peptide targeting the mitochondrion; sequence MNALAATSRNFRQAARLL. The active site involves Lys-102.

It belongs to the Glu/Leu/Phe/Val dehydrogenases family. As to expression, barely expressed in leaves, spikelets and roots. Glumes and stamens specific accumulation.

It is found in the mitochondrion. The catalysed reaction is L-glutamate + NAD(+) + H2O = 2-oxoglutarate + NH4(+) + NADH + H(+). It carries out the reaction L-glutamate + NADP(+) + H2O = 2-oxoglutarate + NH4(+) + NADPH + H(+). The protein is Glutamate dehydrogenase 3, mitochondrial (GDH3) of Oryza sativa subsp. japonica (Rice).